Reading from the N-terminus, the 159-residue chain is Small ribosomal subunit protein uS5c (159 aa).

An S5 DRBM domain is found at 17–80; that stretch reads WEERVVSVQR…TDGKKNVITV (64 aa).

It belongs to the universal ribosomal protein uS5 family. Part of the 30S ribosomal subunit. Contacts protein S4.

Its subcellular location is the plastid. The protein localises to the chloroplast. With S4 and S12 plays an important role in translational accuracy. The protein is Small ribosomal subunit protein uS5c (rps5) of Emiliania huxleyi (Coccolithophore).